Reading from the N-terminus, the 596-residue chain is 3-hydroxy-3-methylglutaryl-coenzyme A reductase 1 (596 aa).

Residues 1–29 are disordered; it reads MDVRRRPVKPLYTSKDASAGEPLKQQEVS. Transmembrane regions (helical) follow at residues 41 to 61 and 83 to 103; these read LYLTNGLFFTMFFSVMYFLLV and AMVSLIASVIYLLGFFGIGFV. The interval 104–183 is linker; that stretch reads QSFVSRSNSD…SPIIMPALSE (80 aa). Residues 184–596 form a catalytic region; that stretch reads DDEEIIQSVV…YNRSIKDISK (413 aa). The active-site Charge relay system is Glu278. N-linked (GlcNAc...) asparagine glycosylation is present at Asn342. The active-site Charge relay system is the Lys410. An N-linked (GlcNAc...) asparagine glycan is attached at Asn455. Asp486 acts as the Charge relay system in catalysis. The active-site Proton donor is the His584. Asn588 carries N-linked (GlcNAc...) asparagine glycosylation.

The protein belongs to the HMG-CoA reductase family. As to expression, expressed in flower primordia and anthers.

Its subcellular location is the endoplasmic reticulum membrane. It carries out the reaction (R)-mevalonate + 2 NADP(+) + CoA = (3S)-3-hydroxy-3-methylglutaryl-CoA + 2 NADPH + 2 H(+). It participates in metabolic intermediate biosynthesis; (R)-mevalonate biosynthesis; (R)-mevalonate from acetyl-CoA: step 3/3. Its function is as follows. Catalyzes the synthesis of mevalonate. The specific precursor of all isoprenoid compounds present in plants. The polypeptide is 3-hydroxy-3-methylglutaryl-coenzyme A reductase 1 (HMG1) (Solanum tuberosum (Potato)).